The sequence spans 144 residues: Single-stranded DNA-binding protein 3 (144 aa).

One can recognise an SSB domain in the interval 1 to 103; it reads MNKVVLIGRL…IVAEEVQFLE (103 aa). Positions 112–134 are enriched in polar residues; it reads MANDQFNNGNENGSMQLPDNNDI. Residues 112–144 are disordered; that stretch reads MANDQFNNGNENGSMQLPDNNDITPIDDGDIPF.

In terms of assembly, homotetramer.

In Clostridium acetobutylicum (strain ATCC 824 / DSM 792 / JCM 1419 / IAM 19013 / LMG 5710 / NBRC 13948 / NRRL B-527 / VKM B-1787 / 2291 / W), this protein is Single-stranded DNA-binding protein 3 (ssb3).